Reading from the N-terminus, the 449-residue chain is Phosphoglucosamine mutase (449 aa).

The Phosphoserine intermediate role is filled by S104. Mg(2+) contacts are provided by S104, D243, D245, and D247. The residue at position 104 (S104) is a Phosphoserine.

It belongs to the phosphohexose mutase family. Requires Mg(2+) as cofactor. In terms of processing, activated by phosphorylation.

It catalyses the reaction alpha-D-glucosamine 1-phosphate = D-glucosamine 6-phosphate. Catalyzes the conversion of glucosamine-6-phosphate to glucosamine-1-phosphate. The sequence is that of Phosphoglucosamine mutase from Xanthomonas oryzae pv. oryzae (strain PXO99A).